The primary structure comprises 705 residues: Polyribonucleotide nucleotidyltransferase (705 aa).

The Mg(2+) site is built by D486 and D492. Residues 553 to 612 (PQFHTMKVDPEKIRDIIGKGGATIRSITEETGASIDIDDDGTVKIYGDDGDSLQGAINRI) form the KH domain. In terms of domain architecture, S1 motif spans 622–690 (GEVYKGKVVR…QRGRIKLSIK (69 aa)).

The protein belongs to the polyribonucleotide nucleotidyltransferase family. In terms of assembly, component of the RNA degradosome, which is a multiprotein complex involved in RNA processing and mRNA degradation. The cofactor is Mg(2+).

Its subcellular location is the cytoplasm. It catalyses the reaction RNA(n+1) + phosphate = RNA(n) + a ribonucleoside 5'-diphosphate. Its function is as follows. Involved in mRNA degradation. Catalyzes the phosphorolysis of single-stranded polyribonucleotides processively in the 3'- to 5'-direction. In Teredinibacter turnerae (strain ATCC 39867 / T7901), this protein is Polyribonucleotide nucleotidyltransferase.